Reading from the N-terminus, the 248-residue chain is 2,3-bisphosphoglycerate-dependent phosphoglycerate mutase (248 aa).

Residues 8-15 (RHGESEWN), 21-22 (TG), R60, 87-90 (ERHY), K98, 114-115 (RR), and 183-184 (GN) contribute to the substrate site. The active-site Tele-phosphohistidine intermediate is the H9. The active-site Proton donor/acceptor is the E87.

The protein belongs to the phosphoglycerate mutase family. BPG-dependent PGAM subfamily.

It carries out the reaction (2R)-2-phosphoglycerate = (2R)-3-phosphoglycerate. The protein operates within carbohydrate degradation; glycolysis; pyruvate from D-glyceraldehyde 3-phosphate: step 3/5. In terms of biological role, catalyzes the interconversion of 2-phosphoglycerate and 3-phosphoglycerate. This Borrelia hermsii (strain HS1 / DAH) protein is 2,3-bisphosphoglycerate-dependent phosphoglycerate mutase.